We begin with the raw amino-acid sequence, 583 residues long: Aspartate--tRNA ligase (583 aa).

Glu-174 lines the L-aspartate pocket. An aspartate region spans residues 198–201 (QTFK). Arg-220 is an L-aspartate binding site. ATP-binding positions include 220-222 (RDE) and Gln-229. His-445 contacts L-aspartate. Residue Glu-479 coordinates ATP. Arg-486 provides a ligand contact to L-aspartate. Residue 531-534 (GLDR) coordinates ATP.

The protein belongs to the class-II aminoacyl-tRNA synthetase family. Type 1 subfamily. In terms of assembly, homodimer.

It localises to the cytoplasm. The enzyme catalyses tRNA(Asp) + L-aspartate + ATP = L-aspartyl-tRNA(Asp) + AMP + diphosphate. In terms of biological role, catalyzes the attachment of L-aspartate to tRNA(Asp) in a two-step reaction: L-aspartate is first activated by ATP to form Asp-AMP and then transferred to the acceptor end of tRNA(Asp). The protein is Aspartate--tRNA ligase of Flavobacterium psychrophilum (strain ATCC 49511 / DSM 21280 / CIP 103535 / JIP02/86).